A 274-amino-acid chain; its full sequence is Putative septum site-determining protein MinD (274 aa).

22 to 29 (KGGVGKTT) provides a ligand contact to ATP.

This sequence belongs to the ParA family. MinD subfamily.

The protein localises to the plastid. It localises to the chloroplast. In terms of biological role, ATPase required for the correct placement of the division site. This chain is Putative septum site-determining protein MinD (minD-A), found in Nephroselmis olivacea (Green alga).